The chain runs to 395 residues: WW domain-containing transcription regulator protein 1 (395 aa).

A Glycyl lysine isopeptide (Lys-Gly) (interchain with G-Cter in ubiquitin) cross-link involves residue Lys46. Residues 52–116 form a disordered region; that stretch reads FFKEPDSGSH…AQQHAHLRQQ (65 aa). Polar residues predominate over residues 61–70; that stretch reads HSRQSSTDSS. Ser62 is modified (phosphoserine). Phosphoserine; by LATS2 is present on Ser89. Residues 124–157 enclose the WW domain; that stretch reads LPLPPGWEMTFTATGQRYFLNHIEKITTWQDPRK. The segment at 221–395 is required for interaction with PALS1; sequence PNALTTQQQQ…NKSEPFLTWL (175 aa). Residues 224-258 adopt a coiled-coil conformation; that stretch reads LTTQQQQQQKLRLQRIQMERERIRMRQEELMRQEA. The span at 277–293 shows a compositional bias: polar residues; that stretch reads PAMSTDMRSVTNSSSDP. Residues 277 to 308 are disordered; sequence PAMSTDMRSVTNSSSDPFLNGGPYHSREQSTD. A Phosphoserine modification is found at Ser290. Position 306 is a phosphoserine; by LATS2 (Ser306). The PDZ-binding motif lies at 389-395; it reads EPFLTWL.

Binds to SLC9A3R2 via the PDZ motif at the plasma membrane. Binds to YWHAZ in vivo and in vitro through the phosphoserine-binding motif RSHSSP. Interacts (via coiled-coil domain) with SMAD2 (via MH1 domain), SMAD3 and SMAD4. Interacts with MED15. Interacts with PAX8 and NKX2-1. Interacts with TEAD1, TEAD2, TEAD3 and TEAD4. Interacts (via WW domain) with PALS1. Interacts with LATS1. Interacts with YAP1 (when phosphorylated at 'Ser-112'). Interacts (via WW domain) with PRRG4 (via cytoplasmic domain). Interacts (via WW domain) with AMOTL2 (via PPXY motif); the interaction promotes WWTR1/TAZ localization to the cytoplasm and tight junctions, thereby inhibiting its transcriptional coactivator properties. Interacts (via WW domain) with AMOT; the interaction facilitates translocation of WWTR1/TAZ to the cytoplasm. In terms of processing, phosphorylated by LATS2 and STK3/MST2. Phosphorylation by LATS2 results in creation of 14-3-3 binding sites, retention in the cytoplasm, and functional inactivation. Phosphorylation results in the inhibition of transcriptional coactivation through YWHAZ-mediated nuclear export. Post-translationally, ubiquitinated at Lys-46; leading to proteasomal degradation. Deubiquitinated and stabilized by UCHL1 at Lys-46; leading to inhibition of osteoclastogenesis. Highly expressed in kidney, heart, placenta and lung.

The protein localises to the nucleus. Its subcellular location is the cytoplasm. The protein resides in the cell membrane. It is found in the cell junction. It localises to the tight junction. Its function is as follows. Transcriptional coactivator which acts as a downstream regulatory target in the Hippo signaling pathway that plays a pivotal role in organ size control and tumor suppression by restricting proliferation and promoting apoptosis. The core of this pathway is composed of a kinase cascade wherein STK3/MST2 and STK4/MST1, in complex with its regulatory protein SAV1, phosphorylates and activates LATS1/2 in complex with its regulatory protein MOB1, which in turn phosphorylates and inactivates YAP1 oncoprotein and WWTR1/TAZ. WWTR1 enhances PAX8 and NKX2-1/TTF1-dependent gene activation. In conjunction with YAP1, involved in the regulation of TGFB1-dependent SMAD2 and SMAD3 nuclear accumulation. Plays a key role in coupling SMADs to the transcriptional machinery such as the mediator complex. Regulates embryonic stem-cell self-renewal, promotes cell proliferation and epithelial-mesenchymal transition. This is WW domain-containing transcription regulator protein 1 from Mus musculus (Mouse).